We begin with the raw amino-acid sequence, 381 residues long: Cytochrome b (381 aa).

Helical transmembrane passes span 34–54, 78–99, 114–134, and 179–199; these read FGSL…FLAM, WLIR…YFHI, WNIG…GYVL, and FFAF…IHVL. Heme b is bound by residues His-84 and His-98. The heme b site is built by His-183 and His-197. Residue His-202 participates in a ubiquinone binding. The next 4 helical transmembrane spans lie at 227–247, 289–309, 321–341, and 348–368; these read YKDA…ALFL, LGGV…PFLH, LTQI…WIGG, and FILI…IALP.

This sequence belongs to the cytochrome b family. As to quaternary structure, the cytochrome bc1 complex contains 3 respiratory subunits (MT-CYB, CYC1 and UQCRFS1), 2 core proteins (UQCRC1 and UQCRC2) and probably 6 low-molecular weight proteins. Requires heme b as cofactor.

It localises to the mitochondrion inner membrane. In terms of biological role, component of the ubiquinol-cytochrome c reductase complex (complex III or cytochrome b-c1 complex) that is part of the mitochondrial respiratory chain. The b-c1 complex mediates electron transfer from ubiquinol to cytochrome c. Contributes to the generation of a proton gradient across the mitochondrial membrane that is then used for ATP synthesis. This is Cytochrome b (mt-cyb) from Isurus oxyrinchus (Shortfin mako shark).